A 717-amino-acid chain; its full sequence is Polyribonucleotide nucleotidyltransferase (717 aa).

Mg(2+)-binding residues include Asp-496 and Asp-502. One can recognise a KH domain in the interval 563-622; sequence PRLLTIKIDPDLIGLVIGPGGKTVKGITEQTGTKIDIDDDGTVTISSTDGEQAEKAKRLI. One can recognise an S1 motif domain in the interval 632-700; that stretch reads GEVYLGRVTR…SKGRLNLTRL (69 aa).

Belongs to the polyribonucleotide nucleotidyltransferase family. Mg(2+) is required as a cofactor.

The protein resides in the cytoplasm. The enzyme catalyses RNA(n+1) + phosphate = RNA(n) + a ribonucleoside 5'-diphosphate. Involved in mRNA degradation. Catalyzes the phosphorolysis of single-stranded polyribonucleotides processively in the 3'- to 5'-direction. The polypeptide is Polyribonucleotide nucleotidyltransferase (Microcystis aeruginosa (strain NIES-843 / IAM M-2473)).